The chain runs to 221 residues: Orotate phosphoribosyltransferase (221 aa).

Lysine 27 provides a ligand contact to 5-phospho-alpha-D-ribose 1-diphosphate. Position 35–36 (35–36) interacts with orotate; it reads FF. Residues 75-76, arginine 102, lysine 103, lysine 106, histidine 108, and 128-136 contribute to the 5-phospho-alpha-D-ribose 1-diphosphate site; these read YK and DDVLTAGTA. Residues threonine 132 and arginine 160 each coordinate orotate.

The protein belongs to the purine/pyrimidine phosphoribosyltransferase family. PyrE subfamily. As to quaternary structure, homodimer. It depends on Mg(2+) as a cofactor.

It carries out the reaction orotidine 5'-phosphate + diphosphate = orotate + 5-phospho-alpha-D-ribose 1-diphosphate. Its pathway is pyrimidine metabolism; UMP biosynthesis via de novo pathway; UMP from orotate: step 1/2. In terms of biological role, catalyzes the transfer of a ribosyl phosphate group from 5-phosphoribose 1-diphosphate to orotate, leading to the formation of orotidine monophosphate (OMP). The polypeptide is Orotate phosphoribosyltransferase (Dichelobacter nodosus (strain VCS1703A)).